The following is a 512-amino-acid chain: Cytochrome P450 76C2 (512 aa).

The chain crosses the membrane as a helical span at residues 3-23; that stretch reads IIFEQALFPLFCFVLSFFIIF. Cysteine 451 is a heme binding site.

The protein belongs to the cytochrome P450 family. Requires heme as cofactor.

It localises to the membrane. The polypeptide is Cytochrome P450 76C2 (CYP76C2) (Arabidopsis thaliana (Mouse-ear cress)).